The primary structure comprises 469 residues: Actin-related protein 4 (469 aa).

Positions 104–136 are disordered; it reads PERSTPPSKKGINISDDGDVPMEDDGNNNEDAT. The span at 119 to 136 shows a compositional bias: acidic residues; sequence DDGDVPMEDDGNNNEDAT.

This sequence belongs to the actin family. ARP4 subfamily. Component of the NuA4 histone acetyltransferase complex, of the INO80 chromatin remodeling complex, and of the SWR1 chromatin remodeling complex.

Its subcellular location is the nucleus. Functionally, chromatin interaction component of the NuA4 histone acetyltransferase complex which is involved in transcriptional activation of selected genes principally by acetylation of nucleosomal histone H4 and H2A. The NuA4 complex is also involved in DNA repair. Is required for NuA4 complex integrity. Component of the SWR1 complex which mediates the ATP-dependent exchange of histone H2A for the H2A variant H2A.Z leading to transcriptional regulation of selected genes by chromatin remodeling. Component of the INO80 complex which remodels chromatin by shifting nucleosomes and is involved in DNA repair. The chain is Actin-related protein 4 (arp-4) from Neurospora crassa (strain ATCC 24698 / 74-OR23-1A / CBS 708.71 / DSM 1257 / FGSC 987).